Here is a 160-residue protein sequence, read N- to C-terminus: Lymphocyte antigen 96 (160 aa).

Residues 1-18 form the signal peptide; it reads MLPFLFFSTLFSSIFTEA. 3 disulfides stabilise this stretch: C25/C51, C37/C148, and C95/C105. A glycan (N-linked (GlcNAc...) asparagine) is linked at N26. The N-linked (GlcNAc...) asparagine glycan is linked to N114. The tract at residues 119–123 is interaction with lipopolysaccharide; it reads FSFKG.

Heterogeneous homomer formed from homodimers; disulfide-linked. Belongs to the lipopolysaccharide (LPS) receptor, a multi-protein complex containing at least CD14, LY96 and TLR4. Binds to the extracellular domains of TLR2 and TLR4. Ligand binding induces interaction with TLR4 and oligomerization of the complex. Post-translationally, N-glycosylated; high-mannose.

It localises to the secreted. It is found in the extracellular space. Functionally, binds bacterial lipopolysaccharide (LPS). Cooperates with TLR4 in the innate immune response to bacterial lipopolysaccharide (LPS), and with TLR2 in the response to cell wall components from Gram-positive and Gram-negative bacteria. Enhances TLR4-dependent activation of NF-kappa-B. Cells expressing both LY96 and TLR4, but not TLR4 alone, respond to LPS. The sequence is that of Lymphocyte antigen 96 (LY96) from Homo sapiens (Human).